A 160-amino-acid chain; its full sequence is Cytochrome c-type biogenesis protein CcmE (160 aa).

Over 1-9 (MRGLKKKRR) the chain is Cytoplasmic. Residues 10 to 30 (IQIIAIAAVALTIATIMIGTA) form a helical; Signal-anchor for type II membrane protein membrane-spanning segment. The Periplasmic portion of the chain corresponds to 31–160 (MRDGINFFRS…DGGYGGASGS (130 aa)). The heme site is built by His-123 and Tyr-127. The interval 141-160 (VYKDPNATDADGGYGGASGS) is disordered.

This sequence belongs to the CcmE/CycJ family.

The protein resides in the cell inner membrane. Functionally, heme chaperone required for the biogenesis of c-type cytochromes. Transiently binds heme delivered by CcmC and transfers the heme to apo-cytochromes in a process facilitated by CcmF and CcmH. The polypeptide is Cytochrome c-type biogenesis protein CcmE (Dinoroseobacter shibae (strain DSM 16493 / NCIMB 14021 / DFL 12)).